Consider the following 705-residue polypeptide: Elongation factor G (705 aa).

Positions 8 to 289 (VNYRNIGISA…TVINYLPSPK (282 aa)) constitute a tr-type G domain. Residues 17 to 24 (AHIDAGKT), 88 to 92 (DTPGH), and 142 to 145 (NKMD) each bind GTP.

It belongs to the TRAFAC class translation factor GTPase superfamily. Classic translation factor GTPase family. EF-G/EF-2 subfamily.

It is found in the cytoplasm. Functionally, catalyzes the GTP-dependent ribosomal translocation step during translation elongation. During this step, the ribosome changes from the pre-translocational (PRE) to the post-translocational (POST) state as the newly formed A-site-bound peptidyl-tRNA and P-site-bound deacylated tRNA move to the P and E sites, respectively. Catalyzes the coordinated movement of the two tRNA molecules, the mRNA and conformational changes in the ribosome. The protein is Elongation factor G of Wigglesworthia glossinidia brevipalpis.